We begin with the raw amino-acid sequence, 434 residues long: Trigger factor (434 aa).

The 86-residue stretch at 161-246 folds into the PPIase FKBP-type domain; the sequence is EDRVTVDFTG…LKKVEQRELP (86 aa).

It belongs to the FKBP-type PPIase family. Tig subfamily.

The protein resides in the cytoplasm. It catalyses the reaction [protein]-peptidylproline (omega=180) = [protein]-peptidylproline (omega=0). In terms of biological role, involved in protein export. Acts as a chaperone by maintaining the newly synthesized protein in an open conformation. Functions as a peptidyl-prolyl cis-trans isomerase. In Sodalis glossinidius (strain morsitans), this protein is Trigger factor.